The following is a 180-amino-acid chain: Inner membrane-spanning protein YciB (180 aa).

Transmembrane regions (helical) follow at residues 25-45, 54-74, 76-96, 118-138, and 150-170; these read QNATLYMLITAIICVTICYFV, IISVSVLLVSGIITLISGNSI, IKIKPTILYVIFGIIFLMSGI, ITLSYRAAAFFFFMAVVNEIV, and FKVFGVIPITFIFILLQLPLL.

The protein belongs to the YciB family.

Its subcellular location is the cell inner membrane. Its function is as follows. Plays a role in cell envelope biogenesis, maintenance of cell envelope integrity and membrane homeostasis. The chain is Inner membrane-spanning protein YciB from Rickettsia canadensis (strain McKiel).